Here is a 347-residue protein sequence, read N- to C-terminus: MRIEEDLKLGFKDVLIRPKRSTLKSRSDVELERQFTFKHSGQTWSGVPIIAANMDTVGTFAMATALASFDILTAVHKHYSVEEWNAFAASASADVLKHVMVSTGTSDTDFEKTKQILIANPALNFLCIDVANGYSEHFVQFVSKAREAWPDKTIIAGNVVTGEMCEELILAGADIVKVGIGPGSVCTTRVKTGVGYPQLSAVIECADAAHGLGGQIISDGGCTMPGDVAKAFGGGADFVMLGGMLAGHEESGGTVVEENGEKFMLFYGMSSESAMNRHVGGVAQYRAAEGKTVKLPLRGPVENTARDVMGGLRSACTYVGASRLKELTKRTTFIRVQEQENRIFNSL.

108–131 (TDFEKTKQILIANPALNFLCIDVA) is an NADP(+) binding site. K(+) contacts are provided by glycine 181 and glycine 183. The active-site Thioimidate intermediate is cysteine 186. 216–239 (IISDGGCTMPGDVAKAFGGGADFV) contributes to the NADP(+) binding site.

This sequence belongs to the IMPDH/GMPR family. GuaC type 1 subfamily. In terms of assembly, homotetramer.

It catalyses the reaction IMP + NH4(+) + NADP(+) = GMP + NADPH + 2 H(+). Catalyzes the irreversible NADPH-dependent deamination of GMP to IMP. It functions in the conversion of nucleobase, nucleoside and nucleotide derivatives of G to A nucleotides, and in maintaining the intracellular balance of A and G nucleotides. The polypeptide is GMP reductase (Enterobacter sp. (strain 638)).